Here is a 396-residue protein sequence, read N- to C-terminus: Elongation factor Tu (396 aa).

The region spanning 10-205 (KPHVNIGTIG…AVDSYIPTPE (196 aa)) is the tr-type G domain. The segment at 19-26 (GHVDHGKT) is G1. 19–26 (GHVDHGKT) provides a ligand contact to GTP. Thr-26 is a binding site for Mg(2+). Residues 60–64 (GITIN) form a G2 region. Residues 81–84 (DCPG) form a G3 region. Residues 81 to 85 (DCPGH) and 136 to 139 (NKCD) contribute to the GTP site. The interval 136–139 (NKCD) is G4. The segment at 174–176 (SAK) is G5.

Belongs to the TRAFAC class translation factor GTPase superfamily. Classic translation factor GTPase family. EF-Tu/EF-1A subfamily. As to quaternary structure, monomer.

The protein resides in the cytoplasm. The enzyme catalyses GTP + H2O = GDP + phosphate + H(+). In terms of biological role, GTP hydrolase that promotes the GTP-dependent binding of aminoacyl-tRNA to the A-site of ribosomes during protein biosynthesis. The chain is Elongation factor Tu from Brevibacillus brevis (strain 47 / JCM 6285 / NBRC 100599).